The sequence spans 525 residues: Exoglucanase 1 (525 aa).

The first 18 residues, 1–18 (MRTAKFATLAALVASAAA), serve as a signal peptide directing secretion. Positions 19–467 (QQACSLTTER…AGNGGNNGGN (449 aa)) are catalytic. The active-site Nucleophile is the glutamate 231. Glutamate 236 functions as the Proton donor in the catalytic mechanism. A glycan (N-linked (GlcNAc...) asparagine) is linked at asparagine 289. The segment at 454 to 492 (GLPGAGNGGNNGGNPPPPTTTTSSAPATTTTASAGPKAG) is disordered. Over residues 456-465 (PGAGNGGNNG) the composition is skewed to gly residues. The interval 468-489 (PPPPTTTTSSAPATTTTASAGP) is linker. The span at 473 to 489 (TTTSSAPATTTTASAGP) shows a compositional bias: low complexity. The 37-residue stretch at 489–525 (PKAGRWQQCGGIGFTGPTQCEEPYICTKLNDWYSQCL) folds into the CBM1 domain. Intrachain disulfides connect cysteine 497–cysteine 514 and cysteine 508–cysteine 524.

This sequence belongs to the glycosyl hydrolase 7 (cellulase C) family.

It carries out the reaction Hydrolysis of (1-&gt;4)-beta-D-glucosidic linkages in cellulose and cellotetraose, releasing cellobiose from the non-reducing ends of the chains.. Its function is as follows. The biological conversion of cellulose to glucose generally requires three types of hydrolytic enzymes: (1) Endoglucanases which cut internal beta-1,4-glucosidic bonds; (2) Exocellobiohydrolases that cut the disaccharide cellobiose from the non-reducing end of the cellulose polymer chain; (3) Beta-1,4-glucosidases which hydrolyze the cellobiose and other short cello-oligosaccharides to glucose. This is Exoglucanase 1 (CBH-1) from Humicola insolens (Soft-rot fungus).